The primary structure comprises 515 residues: 2-isopropylmalate synthase (515 aa).

The Pyruvate carboxyltransferase domain occupies 5–268; sequence VIIFDTTLRD…VCGIDATQIV (264 aa). The Mn(2+) site is built by D14, H202, H204, and N239. The interval 394-515 is regulatory domain; the sequence is KFISLSQHSE…QAKLNAQMTP (122 aa).

It belongs to the alpha-IPM synthase/homocitrate synthase family. LeuA type 1 subfamily. Homodimer. It depends on Mn(2+) as a cofactor.

The protein resides in the cytoplasm. It catalyses the reaction 3-methyl-2-oxobutanoate + acetyl-CoA + H2O = (2S)-2-isopropylmalate + CoA + H(+). Its pathway is amino-acid biosynthesis; L-leucine biosynthesis; L-leucine from 3-methyl-2-oxobutanoate: step 1/4. Catalyzes the condensation of the acetyl group of acetyl-CoA with 3-methyl-2-oxobutanoate (2-ketoisovalerate) to form 3-carboxy-3-hydroxy-4-methylpentanoate (2-isopropylmalate). The sequence is that of 2-isopropylmalate synthase from Polynucleobacter necessarius subsp. necessarius (strain STIR1).